The sequence spans 421 residues: UDP-N-acetylglucosamine 1-carboxyvinyltransferase (421 aa).

A phosphoenolpyruvate-binding site is contributed by 22–23 (KN). A UDP-N-acetyl-alpha-D-glucosamine-binding site is contributed by arginine 93. Cysteine 117 acts as the Proton donor in catalysis. The residue at position 117 (cysteine 117) is a 2-(S-cysteinyl)pyruvic acid O-phosphothioketal. UDP-N-acetyl-alpha-D-glucosamine-binding positions include 122 to 126 (RPVDL), aspartate 308, and isoleucine 330.

It belongs to the EPSP synthase family. MurA subfamily.

It localises to the cytoplasm. It carries out the reaction phosphoenolpyruvate + UDP-N-acetyl-alpha-D-glucosamine = UDP-N-acetyl-3-O-(1-carboxyvinyl)-alpha-D-glucosamine + phosphate. It participates in cell wall biogenesis; peptidoglycan biosynthesis. Functionally, cell wall formation. Adds enolpyruvyl to UDP-N-acetylglucosamine. This chain is UDP-N-acetylglucosamine 1-carboxyvinyltransferase, found in Pseudomonas putida (strain GB-1).